A 288-amino-acid polypeptide reads, in one-letter code: Acetyl-coenzyme A carboxylase carboxyl transferase subunit beta (288 aa).

The region spanning 32–288 is the CoA carboxyltransferase N-terminal domain; sequence MWAKCPSCKR…LRLHSLEGWR (257 aa). The Zn(2+) site is built by Cys-36, Cys-39, Cys-54, and Cys-57. The segment at 36–57 adopts a C4-type zinc-finger fold; the sequence is CPSCKRTLYTKEMGAEKICPHC.

The protein belongs to the AccD/PCCB family. As to quaternary structure, acetyl-CoA carboxylase is a heterohexamer composed of biotin carboxyl carrier protein (AccB), biotin carboxylase (AccC) and two subunits each of ACCase subunit alpha (AccA) and ACCase subunit beta (AccD). Zn(2+) serves as cofactor.

The protein localises to the cytoplasm. The enzyme catalyses N(6)-carboxybiotinyl-L-lysyl-[protein] + acetyl-CoA = N(6)-biotinyl-L-lysyl-[protein] + malonyl-CoA. Its pathway is lipid metabolism; malonyl-CoA biosynthesis; malonyl-CoA from acetyl-CoA: step 1/1. Component of the acetyl coenzyme A carboxylase (ACC) complex. Biotin carboxylase (BC) catalyzes the carboxylation of biotin on its carrier protein (BCCP) and then the CO(2) group is transferred by the transcarboxylase to acetyl-CoA to form malonyl-CoA. The polypeptide is Acetyl-coenzyme A carboxylase carboxyl transferase subunit beta (Enterococcus faecalis (strain ATCC 700802 / V583)).